The sequence spans 174 residues: Nucleoside-triphosphatase THEP1 (174 aa).

ATP-binding positions include 15–22 (GMPGVGKT) and 102–109 (LAIVDEIG).

This sequence belongs to the THEP1 NTPase family.

It carries out the reaction a ribonucleoside 5'-triphosphate + H2O = a ribonucleoside 5'-diphosphate + phosphate + H(+). Its function is as follows. Has nucleotide phosphatase activity towards ATP, GTP, CTP, TTP and UTP. May hydrolyze nucleoside diphosphates with lower efficiency. This chain is Nucleoside-triphosphatase THEP1, found in Pyrobaculum islandicum (strain DSM 4184 / JCM 9189 / GEO3).